Here is a 550-residue protein sequence, read N- to C-terminus: Centrosomal and chromosomal factor (550 aa).

Coiled-coil stretches lie at residues 20-44 (SALSALQQQQQQQQQQHSQTQQQHH), 105-126 (VANSRQQQQQQQQQQQQQQQQQ), and 239-274 (ATSAQQQQQQQQRYQQQQQQLRQQHQQMSQMSQQAH). Disordered regions lie at residues 21–145 (ALSA…KDYS), 208–320 (LSSG…HAAN), 361–380 (SHYAAKGSGGGAGGGKRDAM), and 392–465 (SGKL…SASV). 3 stretches are compositionally biased toward low complexity: residues 24-71 (ALQQ…QQQQ), 81-136 (ANTS…NAAP), and 221-320 (AAVA…HAAN). 2 stretches are compositionally biased toward low complexity: residues 396–412 (QQSQVQQQQPQQQQQHC) and 450–462 (SATPTAGAASGGS).

As to quaternary structure, homodimer. Interacts with esc, Trl, E(z), scm and ph-p in vitro. Found in vivo in an esc-containing complex, which may be the Esc/E(z) complex. Also found in vivo in a Pc-containing complex that may be the PRC1 complex, but does not interact with Pc directly. Interacts with cyclin CycG.

The protein resides in the nucleus. Its subcellular location is the cytoplasm. It is found in the cytoskeleton. The protein localises to the microtubule organizing center. It localises to the centrosome. The protein resides in the chromosome. Its function is as follows. Essential protein required for proper condensation of mitotic chromosomes and progression through mitosis. Binds to specific polytene chromosome sites, many of which are shared with the posterior sex combs (Psc) protein. Involved in maintaining Abd-B repression outside its normal expression domain. This is Centrosomal and chromosomal factor (corto) from Drosophila melanogaster (Fruit fly).